The primary structure comprises 302 residues: Nucleotide-binding protein Rsph17029_0317 (302 aa).

15–22 (GPSGAGRT) lines the ATP pocket. 62 to 65 (DVRN) lines the GTP pocket.

It belongs to the RapZ-like family.

Its function is as follows. Displays ATPase and GTPase activities. This Cereibacter sphaeroides (strain ATCC 17029 / ATH 2.4.9) (Rhodobacter sphaeroides) protein is Nucleotide-binding protein Rsph17029_0317.